Consider the following 264-residue polypeptide: Thymidylate synthase (264 aa).

Arg21 contacts dUMP. His51 serves as a coordination point for (6R)-5,10-methylene-5,6,7,8-tetrahydrofolate. 126-127 provides a ligand contact to dUMP; sequence RR. Catalysis depends on Cys146, which acts as the Nucleophile. DUMP-binding positions include 166 to 169, Asn177, and 207 to 209; these read RSAD and HLY. Asp169 contacts (6R)-5,10-methylene-5,6,7,8-tetrahydrofolate. A (6R)-5,10-methylene-5,6,7,8-tetrahydrofolate-binding site is contributed by Ala263.

This sequence belongs to the thymidylate synthase family. Bacterial-type ThyA subfamily. In terms of assembly, homodimer.

The protein localises to the cytoplasm. It catalyses the reaction dUMP + (6R)-5,10-methylene-5,6,7,8-tetrahydrofolate = 7,8-dihydrofolate + dTMP. It participates in pyrimidine metabolism; dTTP biosynthesis. Its function is as follows. Catalyzes the reductive methylation of 2'-deoxyuridine-5'-monophosphate (dUMP) to 2'-deoxythymidine-5'-monophosphate (dTMP) while utilizing 5,10-methylenetetrahydrofolate (mTHF) as the methyl donor and reductant in the reaction, yielding dihydrofolate (DHF) as a by-product. This enzymatic reaction provides an intracellular de novo source of dTMP, an essential precursor for DNA biosynthesis. This Pseudomonas aeruginosa (strain LESB58) protein is Thymidylate synthase.